A 632-amino-acid chain; its full sequence is Threonine--tRNA ligase (632 aa).

Residues 1 to 61 enclose the TGS domain; it reads MPIITLPDGT…KTDANLAIIT (61 aa). Residues 242–533 form a catalytic region; that stretch reads DHRKIGKIQD…LIEHYEGAYP (292 aa). Zn(2+)-binding residues include Cys-333, His-384, and His-510.

Belongs to the class-II aminoacyl-tRNA synthetase family. In terms of assembly, homodimer. Requires Zn(2+) as cofactor.

It localises to the cytoplasm. The enzyme catalyses tRNA(Thr) + L-threonine + ATP = L-threonyl-tRNA(Thr) + AMP + diphosphate + H(+). Functionally, catalyzes the attachment of threonine to tRNA(Thr) in a two-step reaction: L-threonine is first activated by ATP to form Thr-AMP and then transferred to the acceptor end of tRNA(Thr). Also edits incorrectly charged L-seryl-tRNA(Thr). This Ruthia magnifica subsp. Calyptogena magnifica protein is Threonine--tRNA ligase.